We begin with the raw amino-acid sequence, 361 residues long: Phosphate acyltransferase (361 aa).

The disordered stretch occupies residues 340–361 (VPADGAATEQGPTPRRIAPPRT).

Belongs to the PlsX family. In terms of assembly, homodimer. Probably interacts with PlsY.

It is found in the cytoplasm. It carries out the reaction a fatty acyl-[ACP] + phosphate = an acyl phosphate + holo-[ACP]. It functions in the pathway lipid metabolism; phospholipid metabolism. In terms of biological role, catalyzes the reversible formation of acyl-phosphate (acyl-PO(4)) from acyl-[acyl-carrier-protein] (acyl-ACP). This enzyme utilizes acyl-ACP as fatty acyl donor, but not acyl-CoA. In Anaeromyxobacter dehalogenans (strain 2CP-1 / ATCC BAA-258), this protein is Phosphate acyltransferase.